The primary structure comprises 1846 residues: Brefeldin A-inhibited guanine nucleotide-exchange protein 1 (1846 aa).

Residues 2–224 are DCB; DCB:DCB domain and DCB:HUS domain interaction; that stretch reads YEGKKTKNMF…QEAKQMERER (223 aa). A Phosphoserine modification is found at serine 52. Disordered regions lie at residues 217 to 248, 264 to 302, and 347 to 410; these read AKQM…HLRY, DLDP…DQAT, and VSAS…SPGA. Basic and acidic residues predominate over residues 267–277; that stretch reads PQTHDVDKSLQ. Phosphoserine occurs at positions 286, 289, 290, 394, and 407. Polar residues predominate over residues 391-406; the sequence is SVSSNDTQESGNSSGP. Residues 554-574 are HUS; DCB:HUS domain interaction; sequence ADAQSVVDIYVNYDCDLNAAN. Positions 631–684 are disordered; sequence PNSQTTLGQEKPSEQEISEIKHPETINRYGSLNSLESTSSSGIGSYSTQMSGTD. Positions 641-655 are enriched in basic and acidic residues; that stretch reads KPSEQEISEIKHPET. Low complexity predominate over residues 661–681; sequence SLNSLESTSSSGIGSYSTQMS. The SEC7 domain occupies 688–877; the sequence is QFEVLKQQKE…SAIYNEIAGK (190 aa). The Nuclear localization signal (NLS) signature appears at 708–712; the sequence is KKPKR. Serine 1076, serine 1563, and serine 1566 each carry phosphoserine. The segment at 1571–1600 is disordered; the sequence is DSAQPRSSDNRQQAPLVSVSPASEEVSKGR. Residues 1574–1585 show a composition bias toward polar residues; that stretch reads QPRSSDNRQQAP.

In terms of assembly, homodimer. Interacts with ARFGEF2/BIG2; both proteins are probably part of the same or very similar macromolecular complexes. Interacts with FKBP2. Interacts with MYO9B. Interacts with PRKAR1A and PRKAR2A. Interacts with PPP1CC. Interacts with NCL, FBL, NUP62 and U3 small nucleolar RNA. Interacts with DPY30. Interacts with PDE3A. Interacts with KANK1. Interacts with TBC1D22A and TBC1D22B. Post-translationally, phosphorylated. In vitro phosphorylated by PKA reducing its GEF activity and dephosphorylated by phosphatase PP1.

The protein resides in the cytoplasm. It is found in the perinuclear region. It localises to the golgi apparatus. The protein localises to the trans-Golgi network. Its subcellular location is the nucleus. The protein resides in the nucleolus. It is found in the nucleus matrix. It localises to the membrane. Its activity is regulated as follows. Inhibited by brefeldin A. Its function is as follows. Promotes guanine-nucleotide exchange on ARF1 and ARF3. Promotes the activation of ARF1/ARF3 through replacement of GDP with GTP. Involved in vesicular trafficking. Required for the maintenance of Golgi structure; the function may be independent of its GEF activity. Required for the maturation of integrin beta-1 in the Golgi. Involved in the establishment and persistence of cell polarity during directed cell movement in wound healing. Proposed to act as A kinase-anchoring protein (AKAP) and may mediate crosstalk between Arf and PKA pathways. Inhibits GAP activity of MYO9B probably through competitive RhoA binding. The function in the nucleus remains to be determined. In Rattus norvegicus (Rat), this protein is Brefeldin A-inhibited guanine nucleotide-exchange protein 1 (Arfgef1).